Here is a 339-residue protein sequence, read N- to C-terminus: Glucokinase (339 aa).

Residue 16–21 (GDIGGT) participates in ATP binding.

This sequence belongs to the bacterial glucokinase family.

It localises to the cytoplasm. The catalysed reaction is D-glucose + ATP = D-glucose 6-phosphate + ADP + H(+). The protein is Glucokinase of Pseudomonas paraeruginosa (strain DSM 24068 / PA7) (Pseudomonas aeruginosa (strain PA7)).